A 280-amino-acid polypeptide reads, in one-letter code: Dual adapter for phosphotyrosine and 3-phosphotyrosine and 3-phosphoinositide (280 aa).

Residues 1-20 (MGRAELLEGKMSTQDPSDLW) are disordered. The 95-residue stretch at 35–129 (WYHGNLTRHA…GTLMVLKHPY (95 aa)) folds into the SH2 domain. The residue at position 139 (Tyr139) is a Phosphotyrosine. A Phosphoserine modification is found at Ser141. A PH domain is found at 164-259 (LGTKEGYLTK…WIKILRWKLS (96 aa)).

As to quaternary structure, interacts with PtdIns(3,4,5)P3 and PLCG2. In vitro, interacts with PtdIns(3,4)P2. Post-translationally, phosphorylated on tyrosine residues. Highly expressed in placenta and lung, followed by brain, heart, kidney, liver, pancreas and skeletal muscle. Expressed by B-lymphocytes, but not T-lymphocytes or nonhematopoietic cells.

It localises to the cytoplasm. It is found in the membrane. In terms of biological role, may act as a B-cell-associated adapter that regulates B-cell antigen receptor (BCR)-signaling downstream of PI3K. The polypeptide is Dual adapter for phosphotyrosine and 3-phosphotyrosine and 3-phosphoinositide (DAPP1) (Homo sapiens (Human)).